We begin with the raw amino-acid sequence, 154 residues long: MAL-like protein (154 aa).

Transmembrane regions (helical) follow at residues 24–44 (LFLTIPFAFFLPELVFGFWVW), 61–81 (VLYVSLTSFLISLMFLMSYLF), 99–119 (GTTGILYMSASVLQAYATIIS), and 131–151 (VAASFFAFLTTLLYILHAFSI). Positions 24–154 (LFLTIPFAFF…ILHAFSIYYH (131 aa)) constitute an MARVEL domain.

It belongs to the MAL family.

Its subcellular location is the membrane. This Mus musculus (Mouse) protein is MAL-like protein (Mall).